The sequence spans 874 residues: Alanine--tRNA ligase (874 aa).

Positions 563, 567, 665, and 669 each coordinate Zn(2+).

Belongs to the class-II aminoacyl-tRNA synthetase family. Zn(2+) is required as a cofactor.

Its subcellular location is the cytoplasm. The catalysed reaction is tRNA(Ala) + L-alanine + ATP = L-alanyl-tRNA(Ala) + AMP + diphosphate. Its function is as follows. Catalyzes the attachment of alanine to tRNA(Ala) in a two-step reaction: alanine is first activated by ATP to form Ala-AMP and then transferred to the acceptor end of tRNA(Ala). Also edits incorrectly charged Ser-tRNA(Ala) and Gly-tRNA(Ala) via its editing domain. This is Alanine--tRNA ligase from Aeromonas salmonicida (strain A449).